The primary structure comprises 157 residues: 2-C-methyl-D-erythritol 2,4-cyclodiphosphate synthase (157 aa).

Asp9 and His11 together coordinate a divalent metal cation. Residues 9-11 (DVH) and 35-36 (HS) each bind 4-CDP-2-C-methyl-D-erythritol 2-phosphate. His43 is an a divalent metal cation binding site. 4-CDP-2-C-methyl-D-erythritol 2-phosphate is bound by residues 57–59 (DIG), 62–66 (FPDTD), 101–107 (AQKPKMA), 133–136 (TTTE), Phe140, and Arg143.

Belongs to the IspF family. As to quaternary structure, homotrimer. It depends on a divalent metal cation as a cofactor.

It catalyses the reaction 4-CDP-2-C-methyl-D-erythritol 2-phosphate = 2-C-methyl-D-erythritol 2,4-cyclic diphosphate + CMP. It participates in isoprenoid biosynthesis; isopentenyl diphosphate biosynthesis via DXP pathway; isopentenyl diphosphate from 1-deoxy-D-xylulose 5-phosphate: step 4/6. Involved in the biosynthesis of isopentenyl diphosphate (IPP) and dimethylallyl diphosphate (DMAPP), two major building blocks of isoprenoid compounds. Catalyzes the conversion of 4-diphosphocytidyl-2-C-methyl-D-erythritol 2-phosphate (CDP-ME2P) to 2-C-methyl-D-erythritol 2,4-cyclodiphosphate (ME-CPP) with a corresponding release of cytidine 5-monophosphate (CMP). The polypeptide is 2-C-methyl-D-erythritol 2,4-cyclodiphosphate synthase (Halalkalibacterium halodurans (strain ATCC BAA-125 / DSM 18197 / FERM 7344 / JCM 9153 / C-125) (Bacillus halodurans)).